A 943-amino-acid chain; its full sequence is Protein translocase subunit SecA (943 aa).

ATP-binding positions include Gln-90, 108 to 112, and Asp-509; that span reads GEGKT. The segment at 535–564 is disordered; that stretch reads PDNEHKPPIPKQRNSKSKGGFSKKASSKLK.

The protein belongs to the SecA family. As to quaternary structure, monomer and homodimer. Part of the essential Sec protein translocation apparatus which comprises SecA, SecYEG and auxiliary proteins SecDF. Other proteins may also be involved.

It is found in the cell inner membrane. Its subcellular location is the cellular thylakoid membrane. It localises to the cytoplasm. The enzyme catalyses ATP + H2O + cellular proteinSide 1 = ADP + phosphate + cellular proteinSide 2.. In terms of biological role, part of the Sec protein translocase complex. Interacts with the SecYEG preprotein conducting channel. Has a central role in coupling the hydrolysis of ATP to the transfer of proteins into and across the cell membrane, serving as an ATP-driven molecular motor driving the stepwise translocation of polypeptide chains across the membrane. Its function is as follows. Probably participates in protein translocation into and across both the cytoplasmic and thylakoid membranes in cyanobacterial cells. In Prochlorococcus marinus (strain MIT 9215), this protein is Protein translocase subunit SecA.